Here is a 211-residue protein sequence, read N- to C-terminus: Small ribosomal subunit protein uS3 (211 aa).

The KH type-2 domain maps to 38-106 (LRKFIKKAFY…NIELNIIEVK (69 aa)).

The protein belongs to the universal ribosomal protein uS3 family. As to quaternary structure, part of the 30S ribosomal subunit. Forms a tight complex with proteins S10 and S14.

Binds the lower part of the 30S subunit head. Binds mRNA in the 70S ribosome, positioning it for translation. The polypeptide is Small ribosomal subunit protein uS3 (Ehrlichia ruminantium (strain Gardel)).